We begin with the raw amino-acid sequence, 190 residues long: Protein GrpE (190 aa).

Positions 1 to 42 (MNEKDNQTTSEPENEQEIIDVNDSGEQPEENETEQPQEEAVE) are disordered. Residues 26 to 42 (EQPEENETEQPQEEAVE) show a composition bias toward acidic residues.

Belongs to the GrpE family. As to quaternary structure, homodimer.

The protein resides in the cytoplasm. Participates actively in the response to hyperosmotic and heat shock by preventing the aggregation of stress-denatured proteins, in association with DnaK and GrpE. It is the nucleotide exchange factor for DnaK and may function as a thermosensor. Unfolded proteins bind initially to DnaJ; upon interaction with the DnaJ-bound protein, DnaK hydrolyzes its bound ATP, resulting in the formation of a stable complex. GrpE releases ADP from DnaK; ATP binding to DnaK triggers the release of the substrate protein, thus completing the reaction cycle. Several rounds of ATP-dependent interactions between DnaJ, DnaK and GrpE are required for fully efficient folding. The polypeptide is Protein GrpE (Oceanobacillus iheyensis (strain DSM 14371 / CIP 107618 / JCM 11309 / KCTC 3954 / HTE831)).